The following is a 479-amino-acid chain: Lysosomal protective protein (479 aa).

Residues 1 to 27 (MFRAALWPPVLLLLQLLLLACAPGGEG) form the signal peptide. Disulfide bonds link Cys-87-Cys-361, Cys-239-Cys-255, Cys-240-Cys-245, and Cys-280-Cys-330. Asn-144 carries N-linked (GlcNAc...) asparagine glycosylation. The active site involves Ser-177. Residue Asn-332 is glycosylated (N-linked (GlcNAc...) asparagine). Residues Asp-399 and His-456 contribute to the active site.

The protein belongs to the peptidase S10 family. As to quaternary structure, heterodimer of a 32 kDa chain and a 20 kDa chain; disulfide-linked.

It is found in the lysosome. The catalysed reaction is Release of a C-terminal amino acid with broad specificity.. Functionally, protective protein appears to be essential for both the activity of beta-galactosidase and neuraminidase, it associates with these enzymes and exerts a protective function necessary for their stability and activity. This protein is also a carboxypeptidase and can deamidate tachykinins. In Bos taurus (Bovine), this protein is Lysosomal protective protein (CTSA).